A 75-amino-acid polypeptide reads, in one-letter code: Small ribosomal subunit protein bS18 (75 aa).

Belongs to the bacterial ribosomal protein bS18 family. In terms of assembly, part of the 30S ribosomal subunit. Forms a tight heterodimer with protein bS6.

Functionally, binds as a heterodimer with protein bS6 to the central domain of the 16S rRNA, where it helps stabilize the platform of the 30S subunit. The polypeptide is Small ribosomal subunit protein bS18 (Klebsiella pneumoniae (strain 342)).